Here is a 140-residue protein sequence, read N- to C-terminus: MAKQAGKGVEEFRPYVTKVIPVGANIVCADNSGAKILEVINVPRHRTRASRLPSASVGDFCNVVVKKGPAELRKQVYGAVIIRQKYPVRRLNGVRVCFEDNAAVLITPEGETKGTDIKGPVAAEASEKWPRVANLASMVV.

Belongs to the universal ribosomal protein uL14 family. As to quaternary structure, part of the 50S ribosomal subunit. Forms a cluster with proteins L3 and L24e, part of which may contact the 16S rRNA in 2 intersubunit bridges.

Binds to 23S rRNA. Forms part of two intersubunit bridges in the 70S ribosome. The polypeptide is Large ribosomal subunit protein uL14 (Nitrosopumilus maritimus (strain SCM1)).